The chain runs to 322 residues: MYNRYVLSRRRTGFGDCLWSLAAAWRYAQRTARTLAVDWRGSCYLDQPFTNAFPVFFEPIKDIAGVPFICDNRVNEFSFPGPFFPNWWNKPAIECVYRPDAQVFRERDELDELFQAQDDVEANTVVCDACLMWRCDEEAERQIFCSVKPRAEIQARIDAIYQEHFYGYSAIGVHVRHGNGEDVMDHAPYWADPDLAVHQVCTAINAAKALPHPKPVRVILCTDSARVLDQVSSRFPDLLTIPKSFRADQSGPLHSADLGVEGGISALVEMYLLGLCDTVIRFPPTSAFTRYARLSVPRVIEFDLNDPSRLVVIERSSTNTAS.

Residues Met-1–Glu-314 form the GT23 domain.

This sequence belongs to the glycosyltransferase 23 family.

In terms of biological role, fucosyltransferase which adds the fucose moiety of the nod factor on its terminal reducing N-acetylglucosamine end. Uses GDP-fucose as the donor group. This is Nodulation protein Z (nodZ) from Sinorhizobium fredii (strain NBRC 101917 / NGR234).